The primary structure comprises 194 residues: Probable GTP-binding protein EngB (194 aa).

Positions 22 to 194 (PLPEVALAGR…AWKAILHAIS (173 aa)) constitute an EngB-type G domain. GTP-binding positions include 30–37 (GRSNVGKS), 57–61 (GKTQT), 75–78 (DVPG), 142–145 (TKCD), and 174–176 (FSS). Mg(2+) contacts are provided by serine 37 and threonine 59.

This sequence belongs to the TRAFAC class TrmE-Era-EngA-EngB-Septin-like GTPase superfamily. EngB GTPase family. Mg(2+) serves as cofactor.

Functionally, necessary for normal cell division and for the maintenance of normal septation. This is Probable GTP-binding protein EngB from Halalkalibacterium halodurans (strain ATCC BAA-125 / DSM 18197 / FERM 7344 / JCM 9153 / C-125) (Bacillus halodurans).